Reading from the N-terminus, the 658-residue chain is MTQLAIGEATPHGATYDGHGVNFTLFSAHAERVELCVFDSRGNERRYDLPGRRGDVWHGYLAGARPGLRYGYRVHGPWQPAQGHRFNPAKLLLDPYARRVEGELKDHPLLHGGHDEPDYRDNAAVAPKSVVISDHYDWEDDAAPRTPWGKTVIYEAHVKGLTYLHPELPQEIRGTYKALGHPVMVAYFKQLGITALELLPVAQFASEPRLQRMGLTNYWGYNPMAMFALHPAWASSPETALDEFRDAVKALHRAGIEVILDIVLNHSAELDLDGPTFSLRGIDNRSYYWIRDDGDYHNWTGCGNTLNLSHPDVVEYACECLRYWVETCHVDGFRFDLASVMGRTPTFRQDAPLFAAIKACPVLSTVKLIAEPWDIGEGGYQVGNFPPPFAEWNDHFRDAARRFWLPRNLTTGEFACRFAASSDVFKRNGRAPGASVNLLTAHDGFTLRDCVCFNQKHNEANGEENRDGTNSNYSDNHGKEGLGGPLDLMERRRDSIHALLATLLLSQGTPMLLAGDEHGHSQHGNNNAYCQDNALTWLDWQQANRGLTTFTAALIRLRQQIPALTGNSWWEEGDGNVRWLNKNAQPLSADEWQNGPKLMQILLSDRFLIAINATLEVTDIVLPEGEWRAVPPFAGEDNPVITAVWQGPAHGLCVFQRG.

Residue Asp-336 is the Nucleophile of the active site. The Proton donor role is filled by Glu-371. The interval 459-484 is disordered; that stretch reads EANGEENRDGTNSNYSDNHGKEGLGG.

This sequence belongs to the glycosyl hydrolase 13 family.

It catalyses the reaction Hydrolysis of (1-&gt;6)-alpha-D-glucosidic linkages to branches with degrees of polymerization of three or four glucose residues in limit dextrin.. It functions in the pathway glycan degradation; glycogen degradation. Removes maltotriose and maltotetraose chains that are attached by 1,6-alpha-linkage to the limit dextrin main chain, generating a debranched limit dextrin. The chain is Glycogen debranching enzyme from Salmonella paratyphi A (strain ATCC 9150 / SARB42).